A 169-amino-acid chain; its full sequence is Probable calcium-binding protein CML20 (169 aa).

The tract at residues Met-1 to Gln-23 is disordered. 4 EF-hand domains span residues Gln-23 to Glu-58, Met-59 to Glu-94, Asp-96 to Asn-131, and Phe-132 to Gly-167. Residues Asp-36, Asp-38, Ser-40, Thr-42, Glu-47, Asp-72, Asp-74, Ser-76, Glu-83, Asp-109, Asp-111, Asn-113, Lys-115, Asp-120, Asp-145, Asp-147, Asp-149, Glu-151, and Glu-156 each contribute to the Ca(2+) site.

Interacts with TON1A and TON1B. Interacts with SAC3A and SAC3B. Interacts with UCH1 and UCH2.

Its function is as follows. Potential calcium sensor. The protein is Probable calcium-binding protein CML20 of Arabidopsis thaliana (Mouse-ear cress).